Here is a 127-residue protein sequence, read N- to C-terminus: Large ribosomal subunit protein bL19 (127 aa).

The protein belongs to the bacterial ribosomal protein bL19 family.

Its function is as follows. This protein is located at the 30S-50S ribosomal subunit interface and may play a role in the structure and function of the aminoacyl-tRNA binding site. This is Large ribosomal subunit protein bL19 from Trichodesmium erythraeum (strain IMS101).